Here is a 346-residue protein sequence, read N- to C-terminus: 4-hydroxy-3-methylbut-2-enyl diphosphate reductase (346 aa).

[4Fe-4S] cluster is bound at residue cysteine 19. (2E)-4-hydroxy-3-methylbut-2-enyl diphosphate contacts are provided by histidine 48 and histidine 84. Histidine 48 and histidine 84 together coordinate dimethylallyl diphosphate. The isopentenyl diphosphate site is built by histidine 48 and histidine 84. Cysteine 106 contributes to the [4Fe-4S] cluster binding site. A (2E)-4-hydroxy-3-methylbut-2-enyl diphosphate-binding site is contributed by histidine 134. Histidine 134 lines the dimethylallyl diphosphate pocket. Histidine 134 provides a ligand contact to isopentenyl diphosphate. Glutamate 136 functions as the Proton donor in the catalytic mechanism. Threonine 175 provides a ligand contact to (2E)-4-hydroxy-3-methylbut-2-enyl diphosphate. Cysteine 205 lines the [4Fe-4S] cluster pocket. Residues serine 233, serine 234, asparagine 235, and serine 278 each contribute to the (2E)-4-hydroxy-3-methylbut-2-enyl diphosphate site. Dimethylallyl diphosphate contacts are provided by serine 233, serine 234, asparagine 235, and serine 278. Serine 233, serine 234, asparagine 235, and serine 278 together coordinate isopentenyl diphosphate.

It belongs to the IspH family. It depends on [4Fe-4S] cluster as a cofactor.

It catalyses the reaction isopentenyl diphosphate + 2 oxidized [2Fe-2S]-[ferredoxin] + H2O = (2E)-4-hydroxy-3-methylbut-2-enyl diphosphate + 2 reduced [2Fe-2S]-[ferredoxin] + 2 H(+). It carries out the reaction dimethylallyl diphosphate + 2 oxidized [2Fe-2S]-[ferredoxin] + H2O = (2E)-4-hydroxy-3-methylbut-2-enyl diphosphate + 2 reduced [2Fe-2S]-[ferredoxin] + 2 H(+). Its pathway is isoprenoid biosynthesis; dimethylallyl diphosphate biosynthesis; dimethylallyl diphosphate from (2E)-4-hydroxy-3-methylbutenyl diphosphate: step 1/1. It functions in the pathway isoprenoid biosynthesis; isopentenyl diphosphate biosynthesis via DXP pathway; isopentenyl diphosphate from 1-deoxy-D-xylulose 5-phosphate: step 6/6. In terms of biological role, catalyzes the conversion of 1-hydroxy-2-methyl-2-(E)-butenyl 4-diphosphate (HMBPP) into a mixture of isopentenyl diphosphate (IPP) and dimethylallyl diphosphate (DMAPP). Acts in the terminal step of the DOXP/MEP pathway for isoprenoid precursor biosynthesis. This is 4-hydroxy-3-methylbut-2-enyl diphosphate reductase from Brucella melitensis biotype 1 (strain ATCC 23456 / CCUG 17765 / NCTC 10094 / 16M).